The following is a 110-amino-acid chain: Large ribosomal subunit protein uL22 (110 aa).

Belongs to the universal ribosomal protein uL22 family. In terms of assembly, part of the 50S ribosomal subunit.

Its function is as follows. This protein binds specifically to 23S rRNA; its binding is stimulated by other ribosomal proteins, e.g. L4, L17, and L20. It is important during the early stages of 50S assembly. It makes multiple contacts with different domains of the 23S rRNA in the assembled 50S subunit and ribosome. In terms of biological role, the globular domain of the protein is located near the polypeptide exit tunnel on the outside of the subunit, while an extended beta-hairpin is found that lines the wall of the exit tunnel in the center of the 70S ribosome. The polypeptide is Large ribosomal subunit protein uL22 (Bdellovibrio bacteriovorus (strain ATCC 15356 / DSM 50701 / NCIMB 9529 / HD100)).